The primary structure comprises 1234 residues: ATP-dependent helicase/nuclease subunit A (1234 aa).

Residues 2-475 (TQFTTSQQAA…IILAENFRST (474 aa)) enclose the UvrD-like helicase ATP-binding domain. Position 23-30 (23-30 (ASAGSGKT)) interacts with ATP. The 300-residue stretch at 507–806 (YGALDYGDAH…KLMTIHKSKG (300 aa)) folds into the UvrD-like helicase C-terminal domain.

The protein belongs to the helicase family. AddA subfamily. As to quaternary structure, heterodimer of AddA and AddB/RexB. Mg(2+) is required as a cofactor.

It carries out the reaction Couples ATP hydrolysis with the unwinding of duplex DNA by translocating in the 3'-5' direction.. The enzyme catalyses ATP + H2O = ADP + phosphate + H(+). The heterodimer acts as both an ATP-dependent DNA helicase and an ATP-dependent, dual-direction single-stranded exonuclease. Recognizes the chi site generating a DNA molecule suitable for the initiation of homologous recombination. The AddA nuclease domain is required for chi fragment generation; this subunit has the helicase and 3' -&gt; 5' nuclease activities. The protein is ATP-dependent helicase/nuclease subunit A of Lacticaseibacillus casei (strain BL23) (Lactobacillus casei).